A 162-amino-acid polypeptide reads, in one-letter code: SCF ubiquitin ligase complex protein SKP1b (162 aa).

Residue Ser-2 is modified to N-acetylserine. The segment at 100-162 (ILAANYLDIK…NEWCEDKGGN (63 aa)) is interaction with the F-box domain of F-box proteins. At Pro-143 the chain carries 4-hydroxyproline. Pro-143 is a glycosylation site (O-linked (GlcNAc...) hydroxyproline).

It belongs to the SKP1 family. Multiprotein complex (SCF) with cullin and F-box-containing protein. Capable of undergoing aggregation. Post-translationally, O-linked glycan consists of linear Gal-Gal-Fuc-Gal-GlcNAc. Not glycosylated in prespore cells. In terms of processing, fpaA and fpaB seem to be identically glycosylated. Glycosylation is required for nuclear enrichment. Post-translationally, hydroxylated by phyA.

It localises to the cytoplasm. Its subcellular location is the nucleus. This is SCF ubiquitin ligase complex protein SKP1b (fpaB-1) from Dictyostelium discoideum (Social amoeba).